We begin with the raw amino-acid sequence, 390 residues long: ATP phosphoribosyltransferase regulatory subunit (390 aa).

Belongs to the class-II aminoacyl-tRNA synthetase family. HisZ subfamily. In terms of assembly, heteromultimer composed of HisG and HisZ subunits.

It is found in the cytoplasm. The protein operates within amino-acid biosynthesis; L-histidine biosynthesis; L-histidine from 5-phospho-alpha-D-ribose 1-diphosphate: step 1/9. Required for the first step of histidine biosynthesis. May allow the feedback regulation of ATP phosphoribosyltransferase activity by histidine. This is ATP phosphoribosyltransferase regulatory subunit from Nitrosomonas eutropha (strain DSM 101675 / C91 / Nm57).